The sequence spans 163 residues: uncharacterized protein (163 aa).

The interval 142-163 (PQIVISEHNNTKETSPSRQFEH) is disordered. Positions 153 to 163 (KETSPSRQFEH) are enriched in polar residues.

This sequence belongs to the RCAN family.

Its function is as follows. Inhibits calcineurin-dependent transcriptional responses by binding to the catalytic domain of calcineurin. This is an uncharacterized protein from Schizosaccharomyces pombe (strain 972 / ATCC 24843) (Fission yeast).